The primary structure comprises 100 residues: MSGNRKRNTSEPREDDEDDYSTKRKRNNEAVNRTRQKKRQEENDTAEKVDELKKENETLERKVEQLQKELSFLKEMFMAYAKNDGNDGPPPPPPPSSSAV.

Disordered regions lie at residues 1-60 (MSGN…ETLE) and 79-100 (AYAK…SSAV). Positions 17 to 80 (EDDYSTKRKR…SFLKEMFMAY (64 aa)) constitute a bZIP domain. The tract at residues 23 to 48 (KRKRNNEAVNRTRQKKRQEENDTAEK) is basic motif. Residues 24–83 (RKRNNEAVNRTRQKKRQEENDTAEKVDELKKENETLERKVEQLQKELSFLKEMFMAYAKN) are a coiled coil. The span at 39 to 60 (RQEENDTAEKVDELKKENETLE) shows a compositional bias: basic and acidic residues. Residues 52 to 73 (LKKENETLERKVEQLQKELSFL) form a leucine-zipper region. The segment covering 88-100 (GPPPPPPPSSSAV) has biased composition (pro residues).

It belongs to the bZIP family. C/EBP subfamily. In terms of assembly, interacts with transcription factor zip-11. In terms of tissue distribution, expressed broadly in somatic tissues including the intestine.

Its subcellular location is the nucleus. Transcription factor that binds to the promoter and the enhancer regions of target genes. Regulates expression of genes involved in fat metabolism, including ech-1.1 and fat-5. Has a protective role in response to infection by the Gram-negative bacterium P.aeruginosa. Required for the activation of infection response gene irg-1 following P.aeruginosa infection. Required to prevent P.aeruginosa ToxA-mediated lethality. May also function in concert with transcription factor zip-11 to mediate immune responses, independently of the pmk-1/p38 MAPK pathway. May act together with the bZIP transcription factor, zip-2. The chain is CCAAT/enhancer-binding protein homolog 2 from Caenorhabditis elegans.